Here is a 342-residue protein sequence, read N- to C-terminus: Ribosomal RNA small subunit methyltransferase C (342 aa).

It belongs to the methyltransferase superfamily. RsmC family. As to quaternary structure, monomer.

It is found in the cytoplasm. The enzyme catalyses guanosine(1207) in 16S rRNA + S-adenosyl-L-methionine = N(2)-methylguanosine(1207) in 16S rRNA + S-adenosyl-L-homocysteine + H(+). In terms of biological role, specifically methylates the guanine in position 1207 of 16S rRNA in the 30S particle. The chain is Ribosomal RNA small subunit methyltransferase C from Shewanella sp. (strain MR-7).